Here is a 970-residue protein sequence, read N- to C-terminus: Transcriptional activator protein DAL81 (970 aa).

3 disordered regions span residues Met-1–Ile-44, Asn-64–Ser-95, and Asp-118–Ile-140. Composition is skewed to low complexity over residues Thr-15–Asn-41, Gln-73–Gln-94, and Ser-121–Ile-140. Residues Cys-150 to Cys-179 constitute a DNA-binding region (zn(2)-C6 fungal-type). Residues Ser-807–Ser-823 show a composition bias toward low complexity. Positions Ser-807–Leu-970 are disordered. 2 stretches are compositionally biased toward polar residues: residues Arg-824–Ile-836 and Lys-858–His-870. Ser-833 carries the post-translational modification Phosphoserine. Residues Pro-875–Thr-894 are compositionally biased toward low complexity. Residues Gln-895 to Glu-906 show a composition bias toward polar residues. Positions Thr-907–Asn-938 are enriched in basic and acidic residues. Composition is skewed to polar residues over residues Pro-939–Lys-954 and Val-961–Leu-970.

The protein resides in the nucleus. Its function is as follows. Positive regulation of genes required for catabolism of GABA (UGA4, UGA1, and UGA2), urea (DUR1 and DUR2), arginine and allantoin. This chain is Transcriptional activator protein DAL81 (DAL81), found in Saccharomyces cerevisiae (strain ATCC 204508 / S288c) (Baker's yeast).